The sequence spans 238 residues: LexA repressor (238 aa).

The segment at residues 26-46 (FDEMKDALELRSKSGIHRLIS) is a DNA-binding region (H-T-H motif). Catalysis depends on for autocatalytic cleavage activity residues serine 159 and lysine 197.

The protein belongs to the peptidase S24 family. Homodimer.

It catalyses the reaction Hydrolysis of Ala-|-Gly bond in repressor LexA.. In terms of biological role, represses a number of genes involved in the response to DNA damage (SOS response), including recA and lexA. In the presence of single-stranded DNA, RecA interacts with LexA causing an autocatalytic cleavage which disrupts the DNA-binding part of LexA, leading to derepression of the SOS regulon and eventually DNA repair. The sequence is that of LexA repressor from Gluconobacter oxydans (strain 621H) (Gluconobacter suboxydans).